The primary structure comprises 328 residues: Cytochrome c biogenesis protein CcsA (328 aa).

The next 8 membrane-spanning stretches (helical) occupy residues 13 to 33 (ISFSVVSIVMTIYFLTLLVNL), 46 to 66 (GIIITFFSITGFLFTRWIFSG), 73 to 93 (LYESLIFLSWAFSIIHMISFF), 101 to 121 (LNAITAPSAIFIQGFATSGLL), 146 to 166 (MVLGYGALLCGSLLSIALLVI), 234 to 254 (IISLGFLFLTIGILSGAVWAN), 263 to 283 (WDPKETWAFITWTIFAIYLHI), and 295 to 315 (AIVASIGFLVIWICYFGVNLL).

The protein belongs to the CcmF/CycK/Ccl1/NrfE/CcsA family. As to quaternary structure, may interact with Ccs1.

The protein resides in the plastid. It localises to the chloroplast thylakoid membrane. Functionally, required during biogenesis of c-type cytochromes (cytochrome c6 and cytochrome f) at the step of heme attachment. The sequence is that of Cytochrome c biogenesis protein CcsA from Aethionema grandiflorum (Persian stone-cress).